We begin with the raw amino-acid sequence, 548 residues long: Chaperonin GroEL (548 aa).

ATP-binding positions include 30–33 (TLGP), Lys-51, 87–91 (DGTTT), Gly-415, and Asp-495.

Belongs to the chaperonin (HSP60) family. As to quaternary structure, forms a cylinder of 14 subunits composed of two heptameric rings stacked back-to-back. Interacts with the co-chaperonin GroES.

The protein localises to the cytoplasm. It catalyses the reaction ATP + H2O + a folded polypeptide = ADP + phosphate + an unfolded polypeptide.. Functionally, together with its co-chaperonin GroES, plays an essential role in assisting protein folding. The GroEL-GroES system forms a nano-cage that allows encapsulation of the non-native substrate proteins and provides a physical environment optimized to promote and accelerate protein folding. The protein is Chaperonin GroEL of Pseudoalteromonas atlantica (strain T6c / ATCC BAA-1087).